Reading from the N-terminus, the 104-residue chain is Small ribosomal subunit protein uS10 (104 aa).

This sequence belongs to the universal ribosomal protein uS10 family. As to quaternary structure, part of the 30S ribosomal subunit.

Its function is as follows. Involved in the binding of tRNA to the ribosomes. This chain is Small ribosomal subunit protein uS10, found in Buchnera aphidicola subsp. Baizongia pistaciae (strain Bp).